Reading from the N-terminus, the 289-residue chain is Ribonuclease HII (289 aa).

Residues 1-55 (MIRDQAKTPGRAKSAAAAKASPAAKGGGNEAAQSAAGKAAAKPAAKPATSKSGKG) form a disordered region. Low complexity-rich tracts occupy residues 7–24 (KTPGRAKSAAAAKASPAA) and 31–55 (AAQSAAGKAAAKPAAKPATSKSGKG). Positions 76-264 (WPVAGCDEAG…VVAARRKHQP (189 aa)) constitute an RNase H type-2 domain. Positions 82, 83, and 173 each coordinate a divalent metal cation.

It belongs to the RNase HII family. Mn(2+) is required as a cofactor. The cofactor is Mg(2+).

It is found in the cytoplasm. It carries out the reaction Endonucleolytic cleavage to 5'-phosphomonoester.. Its function is as follows. Endonuclease that specifically degrades the RNA of RNA-DNA hybrids. The polypeptide is Ribonuclease HII (Bradyrhizobium sp. (strain BTAi1 / ATCC BAA-1182)).